The following is a 1686-amino-acid chain: A disintegrin and metalloproteinase with thrombospondin motifs 7 (1686 aa).

The signal sequence occupies residues M1–G27. A propeptide spanning residues A28–R236 is cleaved from the precursor. N94 carries N-linked (GlcNAc...) asparagine glycosylation. Positions S202–Y209 match the Cysteine switch motif. C204 serves as a coordination point for Zn(2+). One can recognise a Peptidase M12B domain in the interval K242–P452. 11 disulfides stabilise this stretch: C318-C372, C347-C354, C366-C447, C405-C431, C474-C497, C485-C503, C492-C522, C516-C527, C550-C587, C554-C592, and C565-C577. Residue H388 participates in Zn(2+) binding. Residue E389 is part of the active site. Residues H392 and H398 each coordinate Zn(2+). In terms of domain architecture, Disintegrin spans V462–V537. The TSP type-1 1 domain occupies D538–P593. N-linked (GlcNAc...) asparagine glycans are attached at residues N693 and N778. The tract at residues H698–H809 is spacer. TSP type-1 domains are found at residues P821–P880, A881–V940, and C942–R995. Disordered regions lie at residues H1024–N1043, P1080–V1257, and L1344–P1396. Residues D1182–Q1205 show a composition bias toward polar residues. Basic and acidic residues predominate over residues W1210–G1226. The segment covering P1360–S1375 has biased composition (low complexity). TSP type-1 domains are found at residues R1411–H1459, P1462–L1522, S1523–T1567, and P1569–E1629. Residues E1632–S1672 form the PLAC domain. Residues R1666–R1686 form a disordered region.

Interacts with COMP. The cofactor is Zn(2+). N-glycosylated. Can be O-fucosylated by POFUT2 on a serine or a threonine residue found within the consensus sequence C1-X(2)-(S/T)-C2-G of the TSP type-1 repeat domains where C1 and C2 are the first and second cysteine residue of the repeat, respectively. Fucosylated repeats can then be further glycosylated by the addition of a beta-1,3-glucose residue by the glucosyltransferase, B3GALTL. Fucosylation mediates the efficient secretion of ADAMTS family members. Can also be C-glycosylated with one or two mannose molecules on tryptophan residues within the consensus sequence W-X-X-W of the TPRs. N- and C-glycosylations can also facilitate secretion. Post-translationally, O-glycosylated proteoglycan; contains chondroitin sulfate. In terms of processing, may be cleaved by a furin endopeptidase. The precursor is sequentially processed. As to expression, expressed in heart, brain, placenta, lung, liver, skeletal muscle, kidney and pancreas. Detected in meniscus, bone, tendon, cartilage, synovium, fat and ligaments.

The protein localises to the secreted. The protein resides in the extracellular space. It is found in the extracellular matrix. Functionally, metalloprotease. Was previously shown to degrade COMP. However, a later study found no activity against COMP. The polypeptide is A disintegrin and metalloproteinase with thrombospondin motifs 7 (ADAMTS7) (Homo sapiens (Human)).